The sequence spans 146 residues: Keratin-associated protein 12-2 (146 aa).

23 consecutive repeat copies span residues 10-14, 15-19, 20-24, 25-29, 34-38, 40-44, 45-49, 55-59, 60-64, 65-69, 70-74, 75-79, 80-84, 85-89, 90-94, 95-99, 100-104, 105-109, 110-114, 120-124, 125-129, 130-134, and 135-139. A 23 X 5 AA approximate repeats region spans residues 10 to 139; the sequence is CQPACCAPSP…CTSVLCRPIS (130 aa).

This sequence belongs to the KRTAP type 12 family. In terms of assembly, interacts with hair keratins. Restricted to a narrow region of the hair fiber cuticle, lying approximately 20 cell layers above the apex of the dermal papilla of the hair root; not detected in any other tissues.

Functionally, in the hair cortex, hair keratin intermediate filaments are embedded in an interfilamentous matrix, consisting of hair keratin-associated proteins (KRTAP), which are essential for the formation of a rigid and resistant hair shaft through their extensive disulfide bond cross-linking with abundant cysteine residues of hair keratins. The matrix proteins include the high-sulfur and high-glycine-tyrosine keratins. In Homo sapiens (Human), this protein is Keratin-associated protein 12-2 (KRTAP12-2).